The primary structure comprises 458 residues: ATP synthase subunit beta (458 aa).

148–155 (GGAGVGKT) lines the ATP pocket.

The protein belongs to the ATPase alpha/beta chains family. F-type ATPases have 2 components, CF(1) - the catalytic core - and CF(0) - the membrane proton channel. CF(1) has five subunits: alpha(3), beta(3), gamma(1), delta(1), epsilon(1). CF(0) has three main subunits: a(1), b(2) and c(9-12). The alpha and beta chains form an alternating ring which encloses part of the gamma chain. CF(1) is attached to CF(0) by a central stalk formed by the gamma and epsilon chains, while a peripheral stalk is formed by the delta and b chains.

It is found in the cell inner membrane. The catalysed reaction is ATP + H2O + 4 H(+)(in) = ADP + phosphate + 5 H(+)(out). Functionally, produces ATP from ADP in the presence of a proton gradient across the membrane. The catalytic sites are hosted primarily by the beta subunits. The protein is ATP synthase subunit beta of Francisella tularensis subsp. mediasiatica (strain FSC147).